The following is an 87-amino-acid chain: Small ribosomal subunit protein bS20 (87 aa).

It belongs to the bacterial ribosomal protein bS20 family.

Binds directly to 16S ribosomal RNA. The chain is Small ribosomal subunit protein bS20 from Shigella flexneri.